The sequence spans 360 residues: 3-isopropylmalate dehydrogenase (360 aa).

Position 76 to 89 (76 to 89) interacts with NAD(+); the sequence is GPKWDTIERDIRPE. Residues Arg-96, Arg-106, Arg-134, and Asp-224 each contribute to the substrate site. Mg(2+)-binding residues include Asp-224, Asp-248, and Asp-252. 282–294 lines the NAD(+) pocket; sequence GSAPDIAGKGIAN.

This sequence belongs to the isocitrate and isopropylmalate dehydrogenases family. LeuB type 1 subfamily. As to quaternary structure, homodimer. Mg(2+) serves as cofactor. The cofactor is Mn(2+).

The protein localises to the cytoplasm. It carries out the reaction (2R,3S)-3-isopropylmalate + NAD(+) = 4-methyl-2-oxopentanoate + CO2 + NADH. Its pathway is amino-acid biosynthesis; L-leucine biosynthesis; L-leucine from 3-methyl-2-oxobutanoate: step 3/4. Its function is as follows. Catalyzes the oxidation of 3-carboxy-2-hydroxy-4-methylpentanoate (3-isopropylmalate) to 3-carboxy-4-methyl-2-oxopentanoate. The product decarboxylates to 4-methyl-2 oxopentanoate. The sequence is that of 3-isopropylmalate dehydrogenase from Pseudomonas syringae pv. syringae (strain B728a).